We begin with the raw amino-acid sequence, 133 residues long: Interleukin-4 (133 aa).

The N-terminal stretch at 1–24 (MGLTSQLIPTLVCLLVCTSNFAHG) is a signal peptide. Intrachain disulfides connect Cys-27–Cys-133, Cys-48–Cys-85, and Cys-70–Cys-105. N-linked (GlcNAc...) asparagine glycosylation is found at Asn-62, Asn-96, Asn-102, and Asn-108.

Belongs to the IL-4/IL-13 family.

Its subcellular location is the secreted. In terms of biological role, participates in at least several B-cell activation processes as well as of other cell types. It is a costimulator of DNA-synthesis. It induces the expression of class II MHC molecules on resting B-cells. It enhances both secretion and cell surface expression of IgE and IgG1. It also regulates the expression of the low affinity Fc receptor for IgE (CD23) on both lymphocytes and monocytes. Positively regulates IL31RA expression in macrophages. Stimulates autophagy in dendritic cells by interfering with mTORC1 signaling and through the induction of RUFY4. The protein is Interleukin-4 (IL4) of Lama glama (Llama).